A 217-amino-acid chain; its full sequence is Ribosomal RNA large subunit methyltransferase E (217 aa).

5 residues coordinate S-adenosyl-L-methionine: Gly-71, Trp-73, Asp-91, Asp-107, and Asp-132. The active-site Proton acceptor is the Lys-172.

The protein belongs to the class I-like SAM-binding methyltransferase superfamily. RNA methyltransferase RlmE family.

Its subcellular location is the cytoplasm. It carries out the reaction uridine(2552) in 23S rRNA + S-adenosyl-L-methionine = 2'-O-methyluridine(2552) in 23S rRNA + S-adenosyl-L-homocysteine + H(+). In terms of biological role, specifically methylates the uridine in position 2552 of 23S rRNA at the 2'-O position of the ribose in the fully assembled 50S ribosomal subunit. This chain is Ribosomal RNA large subunit methyltransferase E, found in Psychromonas ingrahamii (strain DSM 17664 / CCUG 51855 / 37).